The sequence spans 383 residues: Corticosteroid-binding globulin (383 aa).

N-linked (GlcNAc...) asparagine glycans are attached at residues asparagine 74 and asparagine 154. Glutamine 232 is a cortisol binding site. Asparagine 238 carries an N-linked (GlcNAc...) asparagine glycan. Glutamine 264 contacts cortisol. An N-linked (GlcNAc...) asparagine glycan is attached at asparagine 308. Tryptophan 371 contributes to the cortisol binding site.

This sequence belongs to the serpin family. In terms of tissue distribution, produced and secreted by hepatocytes, but has also been identified in a number of glycocorticoid responsive cells (it is found in maternal lung, spleen, and ovary and fetal kidney).

It localises to the secreted. In terms of biological role, major transport protein for glucocorticoids and progestins in the blood of almost all vertebrate species. The polypeptide is Corticosteroid-binding globulin (SERPINA6) (Oryctolagus cuniculus (Rabbit)).